The following is a 222-amino-acid chain: GTP cyclohydrolase 1 (222 aa).

Positions 111, 114, and 182 each coordinate Zn(2+).

Belongs to the GTP cyclohydrolase I family. As to quaternary structure, toroid-shaped homodecamer, composed of two pentamers of five dimers.

It carries out the reaction GTP + H2O = 7,8-dihydroneopterin 3'-triphosphate + formate + H(+). Its pathway is cofactor biosynthesis; 7,8-dihydroneopterin triphosphate biosynthesis; 7,8-dihydroneopterin triphosphate from GTP: step 1/1. This is GTP cyclohydrolase 1 from Enterobacter sp. (strain 638).